Reading from the N-terminus, the 517-residue chain is MDIIGGQHLRQMWDDLADVYGHKTALICESSGGVVNRYSYLELNQEINRTANLFYTLGIRKGDKVALHLDNCPEFIFCWFGLAKIGAIMVPINARLLREESAWILQNSQACLLVTSAQFYPMYQQIQQEDATQLRHICLTDVALPADDGVSSFTQLKNQQPATLCYAPPLSTDDTAEILFTSGTTSRPKGVVITHYNLRFAGYYSAWQCALRDDEVYLTVMPAFHIDCQCTAAMAAFSAGATFVLVEKYSARAFWGQVQKYRATITECIPMIIRTLMVQPPSANDRQHRLREVMFYLNLSEQEKDAFCERFGVRLLTSYGMTETIVGIIGDRLGDKRRWPSIGRAGFCYEAEIRDDHNRPLPAGEIGEICIKGVLGKTIFKEYFLNPKATAKVLEADGWLHTGDTGYRDEEGFFYFVDRRCNMIKRGGENVSCVELENIIATHPKIQDIVVVGIKDSIRDEAIKAFVVLNEGETLSEEEFFRFCEQNMAKFKVPSYLEIRKVLPRNCSGKIIRKNLK.

Belongs to the ATP-dependent AMP-binding enzyme family.

The catalysed reaction is 4-(trimethylamino)butanoate + ATP + CoA = 4-(trimethylamino)butanoyl-CoA + AMP + diphosphate. It catalyses the reaction crotonobetaine + ATP + CoA = crotonobetainyl-CoA + AMP + diphosphate. The enzyme catalyses (R)-carnitine + ATP + CoA = (R)-carnitinyl-CoA + AMP + diphosphate. The protein operates within amine and polyamine metabolism; carnitine metabolism. In terms of biological role, catalyzes the transfer of CoA to carnitine, generating the initial carnitinyl-CoA needed for the CaiB reaction cycle. Also has activity toward crotonobetaine and gamma-butyrobetaine. This is Crotonobetaine/carnitine--CoA ligase from Shigella dysenteriae serotype 1 (strain Sd197).